The following is a 153-amino-acid chain: Regulatory protein RecX (153 aa).

Belongs to the RecX family.

Its subcellular location is the cytoplasm. Functionally, modulates RecA activity. The polypeptide is Regulatory protein RecX (Pseudomonas aeruginosa (strain UCBPP-PA14)).